The sequence spans 226 residues: Lipoprotein-releasing system ATP-binding protein LolD (226 aa).

The ABC transporter domain maps to 5 to 226 (LKATNINKIY…LLRNGHWENY (222 aa)). Residue 41 to 48 (GTSGSGKS) participates in ATP binding.

Belongs to the ABC transporter superfamily. Lipoprotein translocase (TC 3.A.1.125) family. As to quaternary structure, the complex is composed of two ATP-binding proteins (LolD) and two transmembrane proteins (LolC and LolE).

Its subcellular location is the cell inner membrane. Functionally, part of the ABC transporter complex LolCDE involved in the translocation of mature outer membrane-directed lipoproteins, from the inner membrane to the periplasmic chaperone, LolA. Responsible for the formation of the LolA-lipoprotein complex in an ATP-dependent manner. The chain is Lipoprotein-releasing system ATP-binding protein LolD from Psychrobacter cryohalolentis (strain ATCC BAA-1226 / DSM 17306 / VKM B-2378 / K5).